The primary structure comprises 159 residues: Transcription elongation factor GreA (159 aa).

Residues 7–72 (MTVRGAEKLR…IQEIESKLSN (66 aa)) adopt a coiled-coil conformation.

Belongs to the GreA/GreB family.

Functionally, necessary for efficient RNA polymerase transcription elongation past template-encoded arresting sites. The arresting sites in DNA have the property of trapping a certain fraction of elongating RNA polymerases that pass through, resulting in locked ternary complexes. Cleavage of the nascent transcript by cleavage factors such as GreA or GreB allows the resumption of elongation from the new 3'terminus. GreA releases sequences of 2 to 3 nucleotides. This Buchnera aphidicola subsp. Schizaphis graminum (strain Sg) protein is Transcription elongation factor GreA.